The following is a 144-amino-acid chain: Interleukin-9 (144 aa).

The first 18 residues, 1–18 (MLLAMVLTSALLLCSVAG), serve as a signal peptide directing secretion. Q19 is subject to Pyrrolidone carboxylic acid. N-linked (GlcNAc...) asparagine glycosylation is found at N50, N63, N78, and N114.

Belongs to the IL-7/IL-9 family. Interacts with IL9R. Interacts with IL2RG.

It localises to the secreted. In terms of biological role, multifunctional cytokine secreted mainly by T-helper 2 lymphocytes and also mast cells or NKT cells that plays important roles in the immune response against parasites. Affects intestinal epithelial permeability and adaptive immunity. In addition, induces the differentiation of specific T-cell subsets such as IL-17 producing helper T-cells (TH17) and also proliferation and differentiation of mast cells. Mechanistically, exerts its biological effects through a receptor composed of IL9R subunit and a signal transducing subunit IL2RG. Receptor stimulation results in the rapid activation of JAK1 and JAK3 kinase activities leading to STAT1, STAT3 and STAT5-mediated transcriptional programs. Induction of differentiation genes seems to be mediated by STAT1 alone, while protection of cells from apoptosis depends on STAT3 and STAT5. This is Interleukin-9 (IL9) from Homo sapiens (Human).